A 358-amino-acid polypeptide reads, in one-letter code: UDP-N-acetylglucosamine--N-acetylmuramyl-(pentapeptide) pyrophosphoryl-undecaprenol N-acetylglucosamine transferase (358 aa).

S197 and Q288 together coordinate UDP-N-acetyl-alpha-D-glucosamine.

The protein belongs to the glycosyltransferase 28 family. MurG subfamily.

The protein resides in the cell membrane. It carries out the reaction Mur2Ac(oyl-L-Ala-gamma-D-Glu-L-Lys-D-Ala-D-Ala)-di-trans,octa-cis-undecaprenyl diphosphate + UDP-N-acetyl-alpha-D-glucosamine = beta-D-GlcNAc-(1-&gt;4)-Mur2Ac(oyl-L-Ala-gamma-D-Glu-L-Lys-D-Ala-D-Ala)-di-trans,octa-cis-undecaprenyl diphosphate + UDP + H(+). The protein operates within cell wall biogenesis; peptidoglycan biosynthesis. Functionally, cell wall formation. Catalyzes the transfer of a GlcNAc subunit on undecaprenyl-pyrophosphoryl-MurNAc-pentapeptide (lipid intermediate I) to form undecaprenyl-pyrophosphoryl-MurNAc-(pentapeptide)GlcNAc (lipid intermediate II). The chain is UDP-N-acetylglucosamine--N-acetylmuramyl-(pentapeptide) pyrophosphoryl-undecaprenol N-acetylglucosamine transferase from Streptococcus agalactiae serotype Ia (strain ATCC 27591 / A909 / CDC SS700).